Consider the following 1041-residue polypeptide: Protein EGT2 (1041 aa).

The first 20 residues, 1–20 (MNKLLLHLVRVISILGLANA), serve as a signal peptide directing secretion. 14 N-linked (GlcNAc...) asparagine glycosylation sites follow: N65, N103, N161, N175, N249, N332, N401, N435, N465, N485, N506, N526, N544, and N556. Residues 388 to 410 (SSSSISLSAPSSSNSTFTTPSSS) form a disordered region. Copy 1 of the repeat occupies 457–492 (SSTLSYTSNVTISVSSATQHTTTPSYVSNSTTLSSS). Residues 457–962 (SSTLSYTSNV…TLKTSTFQKA (506 aa)) form a 9 X approximate repeats region. A run of 2 repeats spans residues 577-606 (TVASGSYILTTTTESAQLTEIGSLIPISTI) and 613-647 (SGTDKTGSNKVASSTEIAQSIVNNSSLSVSTINTN). N-linked (GlcNAc...) asparagine glycans are attached at residues N635, N636, N657, and N709. Repeat 4 spans residues 716 to 745 (TDKSDTYSVISSTESAQVTEYDSLLPISTL). N-linked (GlcNAc...) asparagine glycosylation occurs at N756. 5 tandem repeats follow at residues 773–802 (TDKGDAYSVISSTQSAQVTEYGSMLPISTL), 811–840 (TDESGYFTLTTCTESGQATEYGSLIPISTL), 849–886 (TGESVVVGYSTTVGAAQYAQHTSLVPVSTIKGSKTSLS), 887–924 (TEESVVAGYSTTVGAAQYAQHTSLVPVSTIKGSKTSLS), and 925–962 (TEESVVAGYSTTVDSAQYAEHTNLVAIDTLKTSTFQKA). The GPI-anchor amidated glycine moiety is linked to residue G1020. A propeptide spans 1021–1041 (AAGQLTIRIGSLLLGLISFLL) (removed in mature form).

Post-translationally, the GPI-anchor is attached to the protein in the endoplasmic reticulum and serves to target the protein to the cell surface. There, the glucosamine-inositol phospholipid moiety is cleaved off and the GPI-modified mannoprotein is covalently attached via its lipidless GPI glycan remnant to the 1,6-beta-glucan of the outer cell wall layer.

The protein resides in the secreted. Its subcellular location is the cell wall. The protein localises to the membrane. In terms of biological role, seems to be involved in the correct timing of cell separation after cytokinesis, as separation of mutant daughter cells is delayed. Could either be an enzyme necessary for glucans-degradation of the cell wall at the neck region between mother and daughter cells or a regulatory protein controlling this metabolic step. The protein is Protein EGT2 (EGT2) of Saccharomyces cerevisiae (strain ATCC 204508 / S288c) (Baker's yeast).